The primary structure comprises 98 residues: Plastocyanin (98 aa).

Positions 1–98 (AQIVKLGGDD…AGMKMTITVQ (98 aa)) constitute a Plastocyanin-like domain. The Cu cation site is built by His38, Cys83, His86, and Met91.

This sequence belongs to the plastocyanin family. Cu(2+) serves as cofactor.

The protein resides in the plastid. It localises to the chloroplast thylakoid membrane. Functionally, participates in electron transfer between P700 and the cytochrome b6-f complex in photosystem I. In Ulva arasakii (Sea lettuce), this protein is Plastocyanin (PETE).